A 1027-amino-acid polypeptide reads, in one-letter code: Multidrug resistance protein MdtC (1027 aa).

The next 12 helical transmembrane spans lie at 16-36 (LLSLAISLCGALGFMLLPVAP), 333-353 (EVERALAIAVALVILVVFLFL), 360-380 (LIPAVAVPVSLIGTFSAMYLC), 387-407 (LSLMALTVATGFVVDDAIVVL), 431-451 (VGFTVLSMSISLVAVFIPLLL), 463-483 (FAITLTTAIGISLFVSLTLTP), 528-548 (WIMAIFITTLGLNAYLYISAP), 853-873 (LILILAAIVTVYIVLGVLYES), 875-895 (IHPLTILSTLPSAGVGALLAL), 897-917 (LFDTPFSLIALIGIMLLIGIV), 953-973 (PIIMTTLAALFGALPLMLSSG), and 984-1004 (ITIVGGLLMSQLLTLYTTPII).

Belongs to the resistance-nodulation-cell division (RND) (TC 2.A.6) family. MdtC subfamily. As to quaternary structure, part of a tripartite efflux system composed of MdtA, MdtB and MdtC. MdtC forms a heteromultimer with MdtB.

The protein resides in the cell inner membrane. The protein is Multidrug resistance protein MdtC of Proteus mirabilis (strain HI4320).